The primary structure comprises 155 residues: 2-C-methyl-D-erythritol 2,4-cyclodiphosphate synthase (155 aa).

The a divalent metal cation site is built by Asp-8 and His-10. Residues 8–10 (DVH) and 34–35 (HS) contribute to the 4-CDP-2-C-methyl-D-erythritol 2-phosphate site. His-42 lines the a divalent metal cation pocket. 4-CDP-2-C-methyl-D-erythritol 2-phosphate is bound by residues 56–58 (DIG), 61–65 (FPDKD), 132–135 (TTTE), and Arg-142.

Belongs to the IspF family. In terms of assembly, homotrimer. The cofactor is a divalent metal cation.

The enzyme catalyses 4-CDP-2-C-methyl-D-erythritol 2-phosphate = 2-C-methyl-D-erythritol 2,4-cyclic diphosphate + CMP. The protein operates within isoprenoid biosynthesis; isopentenyl diphosphate biosynthesis via DXP pathway; isopentenyl diphosphate from 1-deoxy-D-xylulose 5-phosphate: step 4/6. Its function is as follows. Involved in the biosynthesis of isopentenyl diphosphate (IPP) and dimethylallyl diphosphate (DMAPP), two major building blocks of isoprenoid compounds. Catalyzes the conversion of 4-diphosphocytidyl-2-C-methyl-D-erythritol 2-phosphate (CDP-ME2P) to 2-C-methyl-D-erythritol 2,4-cyclodiphosphate (ME-CPP) with a corresponding release of cytidine 5-monophosphate (CMP). The protein is 2-C-methyl-D-erythritol 2,4-cyclodiphosphate synthase of Desulfatibacillum aliphaticivorans.